Here is a 314-residue protein sequence, read N- to C-terminus: DNA-directed RNA polymerase subunit alpha (314 aa).

The alpha N-terminal domain (alpha-NTD) stretch occupies residues 1-228 (MIEFEKPNIH…EHLGLFMDIS (228 aa)). The alpha C-terminal domain (alpha-CTD) stretch occupies residues 242-314 (PVAASASDSA…DMNLGFRKED (73 aa)).

This sequence belongs to the RNA polymerase alpha chain family. In terms of assembly, homodimer. The RNAP catalytic core consists of 2 alpha, 1 beta, 1 beta' and 1 omega subunit. When a sigma factor is associated with the core the holoenzyme is formed, which can initiate transcription.

The enzyme catalyses RNA(n) + a ribonucleoside 5'-triphosphate = RNA(n+1) + diphosphate. Functionally, DNA-dependent RNA polymerase catalyzes the transcription of DNA into RNA using the four ribonucleoside triphosphates as substrates. The protein is DNA-directed RNA polymerase subunit alpha of Leuconostoc mesenteroides subsp. mesenteroides (strain ATCC 8293 / DSM 20343 / BCRC 11652 / CCM 1803 / JCM 6124 / NCDO 523 / NBRC 100496 / NCIMB 8023 / NCTC 12954 / NRRL B-1118 / 37Y).